A 214-amino-acid polypeptide reads, in one-letter code: Large ribosomal subunit protein uL3 (214 aa).

Polar residues predominate over residues 132 to 145; sequence SNRASHGNSVTTRA. The segment at 132–155 is disordered; it reads SNRASHGNSVTTRAPGSIGQAQDP. Position 153 is an N5-methylglutamine (Gln153).

The protein belongs to the universal ribosomal protein uL3 family. Part of the 50S ribosomal subunit. Forms a cluster with proteins L14 and L19. In terms of processing, methylated by PrmB.

In terms of biological role, one of the primary rRNA binding proteins, it binds directly near the 3'-end of the 23S rRNA, where it nucleates assembly of the 50S subunit. The sequence is that of Large ribosomal subunit protein uL3 from Laribacter hongkongensis (strain HLHK9).